The primary structure comprises 534 residues: CTP synthase (534 aa).

Residues 1 to 267 form an amidoligase domain region; it reads MTKYIFVTGG…DQIVCDHLKL (267 aa). Ser13 contributes to the CTP binding site. UTP is bound at residue Ser13. 14–19 lines the ATP pocket; sequence SIGKGI. Residue Tyr54 participates in L-glutamine binding. An ATP-binding site is contributed by Asp71. Residues Asp71 and Glu141 each coordinate Mg(2+). Residues 148-150, 188-193, and Lys224 contribute to the CTP site; these read DIE and KTKPTQ. UTP contacts are provided by residues 188 to 193 and Lys224; that span reads KTKPTQ. A Glutamine amidotransferase type-1 domain is found at 292 to 534; sequence KIALVGKYVE…FVTAAVENAK (243 aa). Gly354 provides a ligand contact to L-glutamine. The active-site Nucleophile; for glutamine hydrolysis is the Cys381. L-glutamine is bound by residues 382–385, Glu405, and Arg463; that span reads LGMQ. Catalysis depends on residues His508 and Glu510.

This sequence belongs to the CTP synthase family. In terms of assembly, homotetramer.

It carries out the reaction UTP + L-glutamine + ATP + H2O = CTP + L-glutamate + ADP + phosphate + 2 H(+). The enzyme catalyses L-glutamine + H2O = L-glutamate + NH4(+). It catalyses the reaction UTP + NH4(+) + ATP = CTP + ADP + phosphate + 2 H(+). It functions in the pathway pyrimidine metabolism; CTP biosynthesis via de novo pathway; CTP from UDP: step 2/2. Allosterically activated by GTP, when glutamine is the substrate; GTP has no effect on the reaction when ammonia is the substrate. The allosteric effector GTP functions by stabilizing the protein conformation that binds the tetrahedral intermediate(s) formed during glutamine hydrolysis. Inhibited by the product CTP, via allosteric rather than competitive inhibition. Catalyzes the ATP-dependent amination of UTP to CTP with either L-glutamine or ammonia as the source of nitrogen. Regulates intracellular CTP levels through interactions with the four ribonucleotide triphosphates. This Streptococcus thermophilus (strain ATCC BAA-250 / LMG 18311) protein is CTP synthase.